Consider the following 259-residue polypeptide: Ribosomal RNA small subunit methyltransferase A (259 aa).

Positions 13, 15, 39, 60, 84, and 101 each coordinate S-adenosyl-L-methionine.

It belongs to the class I-like SAM-binding methyltransferase superfamily. rRNA adenine N(6)-methyltransferase family. RsmA subfamily.

Its subcellular location is the cytoplasm. The enzyme catalyses adenosine(1518)/adenosine(1519) in 16S rRNA + 4 S-adenosyl-L-methionine = N(6)-dimethyladenosine(1518)/N(6)-dimethyladenosine(1519) in 16S rRNA + 4 S-adenosyl-L-homocysteine + 4 H(+). In terms of biological role, specifically dimethylates two adjacent adenosines (A1518 and A1519) in the loop of a conserved hairpin near the 3'-end of 16S rRNA in the 30S particle. May play a critical role in biogenesis of 30S subunits. This Mesomycoplasma hyopneumoniae (strain 232) (Mycoplasma hyopneumoniae) protein is Ribosomal RNA small subunit methyltransferase A.